Reading from the N-terminus, the 337-residue chain is MTQPIARSIPLQVVSGDTAAPASLQTGVKQIGGDKINRSPVQFVDAPVLRKPSWIRVRIPSGNAVQNLKAKLRENRLVTVCEEASCPNIHECFSHGTATFMILGEVCTRRCSFCDVAHGRPKPPDASEPASLATTVADMGLKYVVVTSVDRDDLRDGGAQHFVDCISAIRASAPKTRIEILTPDFRGKGRMDRALEILATSPPDVFNHNIETVPDLYPNVRPGADYQWSLTLLQRFKAQHPTIATKSGIMLGLGETMEQVQVTLRDLRAHDVDMITIGQYLQPTPHHHPVMRYWTPEEYKALEEYGNALGFSHVASGPMVRSSYHADRQAAGAGVAA.

Positions 81, 86, 92, 107, 111, 114, and 323 each coordinate [4Fe-4S] cluster. Positions 93–312 (FSHGTATFMI…EEYGNALGFS (220 aa)) constitute a Radical SAM core domain.

It belongs to the radical SAM superfamily. Lipoyl synthase family. It depends on [4Fe-4S] cluster as a cofactor.

The protein resides in the cytoplasm. The enzyme catalyses [[Fe-S] cluster scaffold protein carrying a second [4Fe-4S](2+) cluster] + N(6)-octanoyl-L-lysyl-[protein] + 2 oxidized [2Fe-2S]-[ferredoxin] + 2 S-adenosyl-L-methionine + 4 H(+) = [[Fe-S] cluster scaffold protein] + N(6)-[(R)-dihydrolipoyl]-L-lysyl-[protein] + 4 Fe(3+) + 2 hydrogen sulfide + 2 5'-deoxyadenosine + 2 L-methionine + 2 reduced [2Fe-2S]-[ferredoxin]. The protein operates within protein modification; protein lipoylation via endogenous pathway; protein N(6)-(lipoyl)lysine from octanoyl-[acyl-carrier-protein]: step 2/2. In terms of biological role, catalyzes the radical-mediated insertion of two sulfur atoms into the C-6 and C-8 positions of the octanoyl moiety bound to the lipoyl domains of lipoate-dependent enzymes, thereby converting the octanoylated domains into lipoylated derivatives. The protein is Lipoyl synthase of Xanthomonas campestris pv. campestris (strain 8004).